Here is a 483-residue protein sequence, read N- to C-terminus: Glutamyl-tRNA(Gln) amidotransferase subunit A (483 aa).

Residues lysine 76 and serine 151 each act as charge relay system in the active site. Serine 175 serves as the catalytic Acyl-ester intermediate.

It belongs to the amidase family. GatA subfamily. In terms of assembly, heterotrimer of A, B and C subunits.

The enzyme catalyses L-glutamyl-tRNA(Gln) + L-glutamine + ATP + H2O = L-glutaminyl-tRNA(Gln) + L-glutamate + ADP + phosphate + H(+). Its function is as follows. Allows the formation of correctly charged Gln-tRNA(Gln) through the transamidation of misacylated Glu-tRNA(Gln) in organisms which lack glutaminyl-tRNA synthetase. The reaction takes place in the presence of glutamine and ATP through an activated gamma-phospho-Glu-tRNA(Gln). The protein is Glutamyl-tRNA(Gln) amidotransferase subunit A of Pseudomonas fluorescens (strain Pf0-1).